The chain runs to 473 residues: Glutamate--tRNA ligase 1 (473 aa).

The 'HIGH' region motif lies at 11 to 21 (PSPTGYLHIGG). The segment covering 113 to 133 (KARAEGRPPRYDGRWRDRDPS) has biased composition (basic and acidic residues). Residues 113-136 (KARAEGRPPRYDGRWRDRDPSEAP) are disordered. A 'KMSKS' region motif is present at residues 240-244 (KLSKR). K243 contacts ATP.

It belongs to the class-I aminoacyl-tRNA synthetase family. Glutamate--tRNA ligase type 1 subfamily. As to quaternary structure, monomer.

Its subcellular location is the cytoplasm. It carries out the reaction tRNA(Glu) + L-glutamate + ATP = L-glutamyl-tRNA(Glu) + AMP + diphosphate. Its function is as follows. Catalyzes the attachment of glutamate to tRNA(Glu) in a two-step reaction: glutamate is first activated by ATP to form Glu-AMP and then transferred to the acceptor end of tRNA(Glu). The sequence is that of Glutamate--tRNA ligase 1 from Brucella melitensis biotype 1 (strain ATCC 23456 / CCUG 17765 / NCTC 10094 / 16M).